We begin with the raw amino-acid sequence, 759 residues long: Subtilisin-like serine-protease S (759 aa).

A signal peptide spans 1-22 (MGSAKILSFTLLLFVGYTLVHG). Positions 28–105 (YIVYMGDRSH…SVFESKMNKL (78 aa)) constitute an Inhibitor I9 domain. Residues 110-613 (SWDFLGLDTV…SGHVNPVASL (504 aa)) form the Peptidase S8 domain. Aspartate 139 (charge relay system) is an active-site residue. Residue asparagine 170 is glycosylated (N-linked (GlcNAc...) asparagine). The Charge relay system role is filled by histidine 215. Residues asparagine 230 and asparagine 388 are each glycosylated (N-linked (GlcNAc...) asparagine). The 73-residue stretch at 390 to 462 (SFCKEHTLDP…MIGQDAVEEL (73 aa)) folds into the PA domain. Serine 545 serves as the catalytic Charge relay system. 3 N-linked (GlcNAc...) asparagine glycosylation sites follow: asparagine 593, asparagine 642, and asparagine 671.

Belongs to the peptidase S8 family.

It is found in the secreted. The protein resides in the extracellular space. Its subcellular location is the apoplast. In terms of biological role, required for arbuscular mycorrhiza (AM) development during AM symbiosis with AM fungi (e.g. Glomeromycota intraradices). This chain is Subtilisin-like serine-protease S, found in Lotus japonicus (Lotus corniculatus var. japonicus).